A 312-amino-acid polypeptide reads, in one-letter code: D-alanine--D-alanine ligase (312 aa).

An ATP-grasp domain is found at 108 to 308; sequence KLVWQQTGIP…YSELVVKVLS (201 aa). An ATP-binding site is contributed by 138–193; it reads AAKLGVPLFVKPASEGSSVAVEKVKSADALPAALEEAAKHDKIVIVEKSIEGGGEY. 3 residues coordinate Mg(2+): Asp262, Glu275, and Asn277.

This sequence belongs to the D-alanine--D-alanine ligase family. Requires Mg(2+) as cofactor. It depends on Mn(2+) as a cofactor.

It localises to the cytoplasm. The enzyme catalyses 2 D-alanine + ATP = D-alanyl-D-alanine + ADP + phosphate + H(+). It participates in cell wall biogenesis; peptidoglycan biosynthesis. Cell wall formation. This Burkholderia pseudomallei (strain 668) protein is D-alanine--D-alanine ligase.